A 426-amino-acid polypeptide reads, in one-letter code: Probable serine/threonine-protein kinase PBL2 (426 aa).

The interval 1 to 54 is disordered; the sequence is MGNCLDSSAKVDNSNHSPHANSASSGSKVSSKTSRSTGPSGLSTTSYSTDSSFG. Gly2 carries the N-myristoyl glycine lipid modification. Cys4 carries S-palmitoyl cysteine lipidation. Residues 14–38 show a composition bias toward low complexity; sequence SNHSPHANSASSGSKVSSKTSRSTG. Residues 39 to 52 are compositionally biased toward polar residues; that stretch reads PSGLSTTSYSTDSS. The residue at position 75 (Thr75) is a Phosphothreonine. The Protein kinase domain occupies 86–369; the sequence is FRQDNLLGEG…SEVLVTLEQL (284 aa). Residues 92–100 and Lys124 each bind ATP; that span reads LGEGGFGCV. Tyr169 bears the Phosphotyrosine mark. Asp219 serves as the catalytic Proton acceptor. An O-UMP-serine modification is found at Ser253. At Ser253 the chain carries Phosphoserine. Residues Thr254 and Thr259 each carry the phosphothreonine modification. Position 254 is an O-UMP-threonine (Thr254). At Tyr267 the chain carries Phosphotyrosine. The disordered stretch occupies residues 374-426; the sequence is KPGTKHTQMESPRFHHSSVMQKSPVRYSHDRPLLHMTPGASPLPSYTQSPRVR. Positions 417–426 are enriched in polar residues; the sequence is PSYTQSPRVR.

This sequence belongs to the protein kinase superfamily. Ser/Thr protein kinase family. Interacts with FLS2. Interacts with the Xanthomonas campestris effector XopAC/AvrAC; the recognition of X.campestris effector XopAC/AvrAC requires the presence of RKS1 and RPP13L4/ZAR1. Component of a stable high-order oligomeric complex made of RKS1 and RPP13L4/ZAR1 which recruits X.campestris effector XopAC/AvrAC-mediated uridylylated PBL2 in the presence of ATP to form a wheel-like pentameric resistosome; this complex triggers immunity toward X.campestris in vascular tissues. Binds to RKS1 when uridylylated. Uridylylated at Ser-253 and Thr-254 by Xanthomonas campestris effector AvrAC/XopAC; this uridylylation is necessary for specific recruitment to RKS1 and to trigger immunity. Strongly expressed in leaves, moderately in roots, and barely in flowers, mostly in pedicels.

It is found in the cell membrane. The protein localises to the nucleus. The catalysed reaction is L-seryl-[protein] + ATP = O-phospho-L-seryl-[protein] + ADP + H(+). The enzyme catalyses L-threonyl-[protein] + ATP = O-phospho-L-threonyl-[protein] + ADP + H(+). Involved in disease resistance signaling. Contributes to pathogen-associated molecular pattern (PAMP)-triggered immunity (PTI) signaling and defense responses downstream of FLS2. Acts as a BIK1 decoy and enables Xanthomonas campestris AvrAC/XopAC detection; X.campestris effector AvrAC/XopAC-mediated uridylylation promotes the formation of a complex with RKS1 and RPP13L4/ZAR1 which, in turn, activates effector-triggered immunity (ETI) against X.campestris. Promotes, when uridylylated by AvrAC/XopAC, the release of ADP from the inactive RKS1-ZAR1 complex, thus activating the resistosome. In Arabidopsis thaliana (Mouse-ear cress), this protein is Probable serine/threonine-protein kinase PBL2.